The sequence spans 402 residues: UDP-glucose 6-dehydrogenase (402 aa).

NAD(+) is bound by residues 2-19 (KIAV…GVLL), Val11, Asp29, Lys34, Thr83, Thr118, and Glu145. Substrate is bound by residues 141–145 (EFLRE), Lys204, Asn208, 249–253 (YNNPS), and Gly257. Tyr259 serves as a coordination point for NAD(+). Cys260 (nucleophile) is an active-site residue. Lys263 serves as a coordination point for NAD(+). A substrate-binding site is contributed by Lys320. Arg327 contacts NAD(+).

This sequence belongs to the UDP-glucose/GDP-mannose dehydrogenase family.

It catalyses the reaction UDP-alpha-D-glucose + 2 NAD(+) + H2O = UDP-alpha-D-glucuronate + 2 NADH + 3 H(+). Its pathway is nucleotide-sugar biosynthesis; UDP-alpha-D-glucuronate biosynthesis; UDP-alpha-D-glucuronate from UDP-alpha-D-glucose: step 1/1. Catalyzes the formation of UDP-glucuronic acid which is required for capsular hyaluronic acid synthesis. This Streptococcus pyogenes serotype M18 (strain MGAS8232) protein is UDP-glucose 6-dehydrogenase (hasB).